Consider the following 282-residue polypeptide: Pantothenate synthetase (282 aa).

Met31–His38 provides a ligand contact to ATP. The active-site Proton donor is His38. Residue Gln62 participates in (R)-pantoate binding. Gln62 contacts beta-alanine. Gly148–Asp151 is a binding site for ATP. Gln154 contributes to the (R)-pantoate binding site. ATP contacts are provided by residues Val177 and Tyr185–Arg188.

This sequence belongs to the pantothenate synthetase family. In terms of assembly, homodimer.

The protein localises to the cytoplasm. The enzyme catalyses (R)-pantoate + beta-alanine + ATP = (R)-pantothenate + AMP + diphosphate + H(+). Its pathway is cofactor biosynthesis; (R)-pantothenate biosynthesis; (R)-pantothenate from (R)-pantoate and beta-alanine: step 1/1. Functionally, catalyzes the condensation of pantoate with beta-alanine in an ATP-dependent reaction via a pantoyl-adenylate intermediate. This is Pantothenate synthetase from Aquifex aeolicus (strain VF5).